A 326-amino-acid polypeptide reads, in one-letter code: GTP 3',8-cyclase (326 aa).

The region spanning 6–220 (SFGRRINYLR…DRISASYELE (215 aa)) is the Radical SAM core domain. Position 15 (Arg-15) interacts with GTP. Cys-22 and Cys-26 together coordinate [4Fe-4S] cluster. Tyr-28 contacts S-adenosyl-L-methionine. Cys-29 provides a ligand contact to [4Fe-4S] cluster. Arg-65 provides a ligand contact to GTP. Residue Gly-69 coordinates S-adenosyl-L-methionine. Thr-96 lines the GTP pocket. S-adenosyl-L-methionine is bound at residue Ser-120. A GTP-binding site is contributed by Lys-157. Met-191 is an S-adenosyl-L-methionine binding site. 2 residues coordinate [4Fe-4S] cluster: Cys-254 and Cys-257. GTP is bound at residue 259–261 (RVR). Cys-271 contributes to the [4Fe-4S] cluster binding site.

It belongs to the radical SAM superfamily. MoaA family. As to quaternary structure, monomer and homodimer. The cofactor is [4Fe-4S] cluster.

The enzyme catalyses GTP + AH2 + S-adenosyl-L-methionine = (8S)-3',8-cyclo-7,8-dihydroguanosine 5'-triphosphate + 5'-deoxyadenosine + L-methionine + A + H(+). Its pathway is cofactor biosynthesis; molybdopterin biosynthesis. In terms of biological role, catalyzes the cyclization of GTP to (8S)-3',8-cyclo-7,8-dihydroguanosine 5'-triphosphate. The chain is GTP 3',8-cyclase from Geobacter sulfurreducens (strain ATCC 51573 / DSM 12127 / PCA).